The sequence spans 250 residues: Triosephosphate isomerase (250 aa).

9-11 (NWK) serves as a coordination point for substrate. Catalysis depends on H96, which acts as the Electrophile. E168 functions as the Proton acceptor in the catalytic mechanism. Substrate-binding positions include G174, S216, and 237-238 (GG).

The protein belongs to the triosephosphate isomerase family. In terms of assembly, homodimer.

It is found in the cytoplasm. It catalyses the reaction D-glyceraldehyde 3-phosphate = dihydroxyacetone phosphate. It functions in the pathway carbohydrate biosynthesis; gluconeogenesis. The protein operates within carbohydrate degradation; glycolysis; D-glyceraldehyde 3-phosphate from glycerone phosphate: step 1/1. In terms of biological role, involved in the gluconeogenesis. Catalyzes stereospecifically the conversion of dihydroxyacetone phosphate (DHAP) to D-glyceraldehyde-3-phosphate (G3P). The polypeptide is Triosephosphate isomerase (Leptospira borgpetersenii serovar Hardjo-bovis (strain JB197)).